Reading from the N-terminus, the 163-residue chain is Transcriptional repressor NrdR (163 aa).

A zinc finger lies at 3–34; the sequence is CVQCGHLEDKVIDSRMSKDGTTIRRRRVCLRC. An ATP-cone domain is found at 49 to 139; it reads LRVVKRDNLR…VYRQFSNVEE (91 aa).

It belongs to the NrdR family. Requires Zn(2+) as cofactor.

In terms of biological role, negatively regulates transcription of bacterial ribonucleotide reductase nrd genes and operons by binding to NrdR-boxes. In Akkermansia muciniphila (strain ATCC BAA-835 / DSM 22959 / JCM 33894 / BCRC 81048 / CCUG 64013 / CIP 107961 / Muc), this protein is Transcriptional repressor NrdR.